The primary structure comprises 443 residues: Phosphoribosylamine--glycine ligase (443 aa).

Positions 109-324 (RNLFKKYNIK…FLDVCFGISN (216 aa)) constitute an ATP-grasp domain. An ATP-binding site is contributed by 140 to 202 (MTGLGKDVVV…EEKLVGVEFT (63 aa)). Positions 282, 294, and 296 each coordinate Mg(2+). Mn(2+) is bound by residues glutamine 282, glutamate 294, and asparagine 296.

Belongs to the GARS family. The cofactor is Mg(2+). Requires Mn(2+) as cofactor.

It carries out the reaction 5-phospho-beta-D-ribosylamine + glycine + ATP = N(1)-(5-phospho-beta-D-ribosyl)glycinamide + ADP + phosphate + H(+). It functions in the pathway purine metabolism; IMP biosynthesis via de novo pathway; N(1)-(5-phospho-D-ribosyl)glycinamide from 5-phospho-alpha-D-ribose 1-diphosphate: step 2/2. The protein is Phosphoribosylamine--glycine ligase of Methanococcus vannielii (strain ATCC 35089 / DSM 1224 / JCM 13029 / OCM 148 / SB).